The primary structure comprises 414 residues: Ena/VASP-like protein (414 aa).

In terms of domain architecture, WH1 spans 1-112 (MSEQSICQAR…NAMLFALNIM (112 aa)). Phosphoserine is present on S130. Positions 157–369 (ATGPILPPGH…SRVKPAGSVN (213 aa)) are disordered. Residues 179–204 (GPPPPPPPPVPPPPTGSTPPPPPPLP) show a composition bias toward pro residues. The segment covering 217 to 228 (SASGLAAALAGA) has biased composition (low complexity). The EVH2 block A stretch occupies residues 220–240 (GLAAALAGAKLRRVQRPEDAS). The interval 220-411 (GLAAALAGAK…DAIRQELSGI (192 aa)) is EVH2. The KLKR motif lies at 229 to 232 (KLRR). Low complexity predominate over residues 240 to 251 (SGGSSPSGTSKS). S244 and S257 each carry phosphoserine. The segment at 263–280 (GGLMEEMNKLLAKRRKAA) is EVH2 block B. A compositionally biased stretch (polar residues) spans 297–318 (EDPSTSPSPGTRATSQPPNSSE). Phosphoserine occurs at positions 302, 304, 327, 329, 339, 347, 352, and 367. Residues 319-329 (AGRKPWERSNS) show a composition bias toward basic and acidic residues. The required for interaction with ZDHHC17 stretch occupies residues 340–360 (RTPSVAKSPEAKSPLQSQPHS). The segment at 377–411 (DLDRMKQEILEEVVRELHKVKEEIIDAIRQELSGI) is EVH2 block C.

Belongs to the Ena/VASP family. Homotetramer. Binds to the SH3 domains of ABL1, LYN and SRC. Also binds to profilin, with preference for isoform IIa of PFN2, and the WW domain of APBB1/FE65. Binds to SEMA6A. Interacts, via the Pro-rich region, with the C-terminal SH3 domain of DNMBP. Interacts with RAPH1. Binds, via the EVH1 domain, the Pro-rich domain of Listeria monocytogenes actA. Binds, via the EVH1 domain, the Pro-rich domain of ZYX. Interacts with FYB1. Interacts with ZDHHC17. In terms of processing, phosphorylated by PKA; phosphorylation abolishes binding to SH3 domains of ABL and SRC. In terms of tissue distribution, highest expression in thymus and spleen (at protein level). Low levels in placenta, ovary, testis, fat and lung (at protein level). Isoform 1 and isoform 2 are expressed in cortical neurons and glial cells.

Its subcellular location is the cytoplasm. It localises to the cytoskeleton. The protein localises to the stress fiber. It is found in the cell projection. The protein resides in the lamellipodium. Its function is as follows. Ena/VASP proteins are actin-associated proteins involved in a range of processes dependent on cytoskeleton remodeling and cell polarity such as axon guidance and lamellipodial and filopodial dynamics in migrating cells. EVL enhances actin nucleation and polymerization. This chain is Ena/VASP-like protein (Evl), found in Mus musculus (Mouse).